A 252-amino-acid polypeptide reads, in one-letter code: ATP synthase subunit a (252 aa).

Transmembrane regions (helical) follow at residues 29-49, 87-107, 117-137, 146-166, 196-216, and 219-239; these read FTNV…FLFI, FFPL…IGLF, IMIT…YGFY, LFVP…IEII, FIVS…LPLI, and VAIT…FTVL.

The protein belongs to the ATPase A chain family. As to quaternary structure, F-type ATPases have 2 components, CF(1) - the catalytic core - and CF(0) - the membrane proton channel. CF(1) has five subunits: alpha(3), beta(3), gamma(1), delta(1), epsilon(1). CF(0) has three main subunits: a(1), b(2) and c(9-12). The alpha and beta chains form an alternating ring which encloses part of the gamma chain. CF(1) is attached to CF(0) by a central stalk formed by the gamma and epsilon chains, while a peripheral stalk is formed by the delta and b chains.

The protein resides in the cell inner membrane. In terms of biological role, key component of the proton channel; it plays a direct role in the translocation of protons across the membrane. The protein is ATP synthase subunit a of Bartonella tribocorum (strain CIP 105476 / IBS 506).